A 407-amino-acid chain; its full sequence is RNA-binding motif, single-stranded-interacting protein 2 (407 aa).

M1 is subject to N-acetylmethionine. The segment at 29 to 54 (QQMAPPSPSNSTPNSSSGSNGNDQLS) is disordered. Over residues 37–50 (SNSTPNSSSGSNGN) the composition is skewed to low complexity. RRM domains follow at residues 56 to 129 (TNLY…MAKQ) and 135 to 220 (TNLY…FADG). S106 carries the phosphoserine modification. Phosphothreonine is present on T269. Residues S280 and S285 each carry the phosphoserine modification.

The protein resides in the nucleus. The chain is RNA-binding motif, single-stranded-interacting protein 2 (RBMS2) from Homo sapiens (Human).